Reading from the N-terminus, the 40-residue chain is Photosystem II reaction center protein J (40 aa).

A helical transmembrane segment spans residues 10-30; the sequence is LWLIGTVAGILVIGLVGIFFY.

It belongs to the PsbJ family. As to quaternary structure, PSII is composed of 1 copy each of membrane proteins PsbA, PsbB, PsbC, PsbD, PsbE, PsbF, PsbH, PsbI, PsbJ, PsbK, PsbL, PsbM, PsbT, PsbX, PsbY, PsbZ, Psb30/Ycf12, at least 3 peripheral proteins of the oxygen-evolving complex and a large number of cofactors. It forms dimeric complexes.

Its subcellular location is the plastid. The protein resides in the chloroplast thylakoid membrane. One of the components of the core complex of photosystem II (PSII). PSII is a light-driven water:plastoquinone oxidoreductase that uses light energy to abstract electrons from H(2)O, generating O(2) and a proton gradient subsequently used for ATP formation. It consists of a core antenna complex that captures photons, and an electron transfer chain that converts photonic excitation into a charge separation. This is Photosystem II reaction center protein J from Marchantia polymorpha (Common liverwort).